The sequence spans 631 residues: Chaperone protein HtpG (631 aa).

The tract at residues 1–339 is a; substrate-binding; it reads MSTNQETRGF…SNDLPLNVSR (339 aa). A b region spans residues 340 to 555; sequence EILQDNKVTS…DDQMTTQMAK (216 aa). A c region spans residues 556-631; the sequence is LFAAAGQAMP…NTLLSKLTSH (76 aa).

This sequence belongs to the heat shock protein 90 family. As to quaternary structure, homodimer.

Its subcellular location is the cytoplasm. Its function is as follows. Molecular chaperone. Has ATPase activity. The polypeptide is Chaperone protein HtpG (Pasteurella multocida (strain Pm70)).